Consider the following 340-residue polypeptide: NAC domain-containing protein 89 (340 aa).

Positions 21–164 constitute an NAC domain; that stretch reads VFPGFKFSPT…AMVVCRVRRN (144 aa). The DNA-binding element occupies 119-170; that stretch reads IGTKRTLVFHIGRAPKGERTDWIMHEYCVKGVSLDDAMVVCRVRRNKEYNSG. Residues 167 to 181 show a composition bias toward polar residues; that stretch reads YNSGTSQKAPKPNSS. The segment at 167-198 is disordered; that stretch reads YNSGTSQKAPKPNSSAEKHAKVQNGATSSGSP.

Interacts with PAS1.

It localises to the cytoplasm. It is found in the nucleus. Transcription factor involved in plant cell division. This Arabidopsis thaliana (Mouse-ear cress) protein is NAC domain-containing protein 89 (NAC089).